The chain runs to 169 residues: Transcription antitermination protein NusB (169 aa).

Residues 150–169 form a disordered region; sequence AAATSRRTETAGGESNDAGS.

Belongs to the NusB family.

In terms of biological role, involved in transcription antitermination. Required for transcription of ribosomal RNA (rRNA) genes. Binds specifically to the boxA antiterminator sequence of the ribosomal RNA (rrn) operons. The polypeptide is Transcription antitermination protein NusB (Rhodococcus jostii (strain RHA1)).